Here is a 186-residue protein sequence, read N- to C-terminus: Elongation factor P (186 aa).

The protein belongs to the elongation factor P family.

It localises to the cytoplasm. Its pathway is protein biosynthesis; polypeptide chain elongation. Involved in peptide bond synthesis. Stimulates efficient translation and peptide-bond synthesis on native or reconstituted 70S ribosomes in vitro. Probably functions indirectly by altering the affinity of the ribosome for aminoacyl-tRNA, thus increasing their reactivity as acceptors for peptidyl transferase. The sequence is that of Elongation factor P from Shewanella piezotolerans (strain WP3 / JCM 13877).